The sequence spans 158 residues: Placenta growth factor (158 aa).

The or 26 signal peptide spans 1-23 (MLAMKLFTCFLQVLAGLAVHSQG). Residues Asn29 and Asn30 are each glycosylated (N-linked (GlcNAc...) asparagine). Intrachain disulfides connect Cys48–Cys90, Cys79–Cys125, and Cys83–Cys127. N-linked (GlcNAc...) asparagine glycosylation occurs at Asn97. Residues 136 to 158 (AERRKTKGKRKQSKTPQTEEPHL) form a disordered region. Residues 137-148 (ERRKTKGKRKQS) show a composition bias toward basic residues.

It belongs to the PDGF/VEGF growth factor family. As to quaternary structure, antiparallel homodimer; disulfide-linked. Also found as heterodimer with VEGFA/VEGF.

The protein resides in the secreted. In terms of biological role, growth factor active in angiogenesis and endothelial cell growth, stimulating their proliferation and migration. It binds to the receptor FLT1/VEGFR-1. Also promotes cell tumor growth. This Rattus norvegicus (Rat) protein is Placenta growth factor (Pgf).